The following is a 106-amino-acid chain: COX assembly mitochondrial protein homolog (106 aa).

Ala-2 carries the N-acetylalanine modification. The CHCH domain occupies 28–71; that stretch reads RERCSEQVQDFTKCCKDSGVLMVVKCRKENSALKDCLTSYYKDP. Short sequence motifs (cx9C motif) lie at residues 31-41 and 53-63; these read CSEQVQDFTKC and CRKENSALKDC. Cystine bridges form between Cys-31–Cys-63 and Cys-41–Cys-53.

It belongs to the CMC family. Component of the MITRAC (mitochondrial translation regulation assembly intermediate of cytochrome c oxidase complex) complex, the core components of this complex being COA3/MITRAC12 and COX14.

The protein resides in the mitochondrion. In terms of biological role, component of the MITRAC (mitochondrial translation regulation assembly intermediate of cytochrome c oxidase complex) complex, that regulates cytochrome c oxidase assembly. The polypeptide is COX assembly mitochondrial protein homolog (CMC1) (Bos taurus (Bovine)).